A 638-amino-acid chain; its full sequence is Mediator of RNA polymerase II transcription subunit 17 (638 aa).

Residues Met-1–Pro-21 form a disordered region.

Belongs to the Mediator complex subunit 17 family. Component of the Mediator complex.

The protein resides in the nucleus. Its function is as follows. Component of the Mediator complex, a coactivator involved in the regulated transcription of nearly all RNA polymerase II-dependent genes. Mediator functions as a bridge to convey information from gene-specific regulatory proteins to the basal RNA polymerase II transcription machinery. Mediator is recruited to promoters by direct interactions with regulatory proteins and serves as a scaffold for the assembly of a functional preinitiation complex with RNA polymerase II and the general transcription factors. This Aspergillus oryzae (strain ATCC 42149 / RIB 40) (Yellow koji mold) protein is Mediator of RNA polymerase II transcription subunit 17 (srb4).